A 139-amino-acid polypeptide reads, in one-letter code: Endoribonuclease YbeY (139 aa).

Zn(2+) is bound by residues His107, His111, and Asp117.

It belongs to the endoribonuclease YbeY family. Zn(2+) serves as cofactor.

It localises to the cytoplasm. Functionally, single strand-specific metallo-endoribonuclease involved in late-stage 70S ribosome quality control and in maturation of the 3' terminus of the 16S rRNA. In Azobacteroides pseudotrichonymphae genomovar. CFP2, this protein is Endoribonuclease YbeY.